The following is a 29-amino-acid chain: Cyclotide mela-1 (29 aa).

The cyclopeptide (Gly-Asp) cross-link spans 1-29 (GKYTCGETCFKGKCYTPGCTCSYPICKKD). Cystine bridges form between cysteine 5–cysteine 19, cysteine 9–cysteine 21, and cysteine 14–cysteine 26.

In terms of processing, this is a cyclic peptide. Contains 3 disulfide bonds.

In terms of biological role, probably participates in a plant defense mechanism (Potential). Binds to and induces leakage in phospholipd membranes, particularly ones containing 1-palmitoyl-2-oleophosphatidylethanolamine (POPE). In vitro, displays cytotoxicity against cultured cells but no hemolytic activity towards fresh erythrocytes. Not active against Gram-negative bacterium E.coli ATCC 25922 or Gram-positive bacterium S.aureus ATCC 25923 up to a concentration of 64 uM. The protein is Cyclotide mela-1 of Melicytus latifolius (Norfolk Island mahoe).